We begin with the raw amino-acid sequence, 317 residues long: Beta-ketoacyl-[acyl-carrier-protein] synthase III (317 aa).

Residues C112 and H244 contribute to the active site. The interval 245–249 is ACP-binding; that stretch reads QANLR. Residue N274 is part of the active site.

Belongs to the thiolase-like superfamily. FabH family. As to quaternary structure, homodimer.

It is found in the cytoplasm. The enzyme catalyses malonyl-[ACP] + acetyl-CoA + H(+) = 3-oxobutanoyl-[ACP] + CO2 + CoA. It functions in the pathway lipid metabolism; fatty acid biosynthesis. Catalyzes the condensation reaction of fatty acid synthesis by the addition to an acyl acceptor of two carbons from malonyl-ACP. Catalyzes the first condensation reaction which initiates fatty acid synthesis and may therefore play a role in governing the total rate of fatty acid production. Possesses both acetoacetyl-ACP synthase and acetyl transacylase activities. Its substrate specificity determines the biosynthesis of branched-chain and/or straight-chain of fatty acids. The protein is Beta-ketoacyl-[acyl-carrier-protein] synthase III of Baumannia cicadellinicola subsp. Homalodisca coagulata.